Reading from the N-terminus, the 370-residue chain is Holliday junction branch migration complex subunit RuvB 2 (370 aa).

Positions 1–54 (MAIISSRAAGAEDPGQRQQKSSARRRESKLAFARAEGLLQPQAHPSEAQEESLR) are disordered. The segment at 13–214 (DPGQRQQKSS…FGQVQRLRFY (202 aa)) is large ATPase domain (RuvB-L). Residues Leu-53, Arg-54, Gly-95, Lys-98, Thr-99, Thr-100, 161 to 163 (EDF), Arg-204, Tyr-214, and Arg-251 each bind ATP. Thr-99 contributes to the Mg(2+) binding site. The segment at 215-285 (EPHELAEIVL…VAAAALELFQ (71 aa)) is small ATPAse domain (RuvB-S). A head domain (RuvB-H) region spans residues 288-370 (PMGLDWTDRK…TAQSPLPVWS (83 aa)). DNA-binding residues include Arg-343 and Arg-348.

The protein belongs to the RuvB family. As to quaternary structure, homohexamer. Forms an RuvA(8)-RuvB(12)-Holliday junction (HJ) complex. HJ DNA is sandwiched between 2 RuvA tetramers; dsDNA enters through RuvA and exits via RuvB. An RuvB hexamer assembles on each DNA strand where it exits the tetramer. Each RuvB hexamer is contacted by two RuvA subunits (via domain III) on 2 adjacent RuvB subunits; this complex drives branch migration. In the full resolvosome a probable DNA-RuvA(4)-RuvB(12)-RuvC(2) complex forms which resolves the HJ.

It localises to the cytoplasm. The enzyme catalyses ATP + H2O = ADP + phosphate + H(+). In terms of biological role, the RuvA-RuvB-RuvC complex processes Holliday junction (HJ) DNA during genetic recombination and DNA repair, while the RuvA-RuvB complex plays an important role in the rescue of blocked DNA replication forks via replication fork reversal (RFR). RuvA specifically binds to HJ cruciform DNA, conferring on it an open structure. The RuvB hexamer acts as an ATP-dependent pump, pulling dsDNA into and through the RuvAB complex. RuvB forms 2 homohexamers on either side of HJ DNA bound by 1 or 2 RuvA tetramers; 4 subunits per hexamer contact DNA at a time. Coordinated motions by a converter formed by DNA-disengaged RuvB subunits stimulates ATP hydrolysis and nucleotide exchange. Immobilization of the converter enables RuvB to convert the ATP-contained energy into a lever motion, pulling 2 nucleotides of DNA out of the RuvA tetramer per ATP hydrolyzed, thus driving DNA branch migration. The RuvB motors rotate together with the DNA substrate, which together with the progressing nucleotide cycle form the mechanistic basis for DNA recombination by continuous HJ branch migration. Branch migration allows RuvC to scan DNA until it finds its consensus sequence, where it cleaves and resolves cruciform DNA. The chain is Holliday junction branch migration complex subunit RuvB 2 from Synechococcus sp. (strain JA-3-3Ab) (Cyanobacteria bacterium Yellowstone A-Prime).